We begin with the raw amino-acid sequence, 770 residues long: POU domain, class 2, transcription factor 1 (770 aa).

The segment covering 1-26 (MNNPSETNKSSMESEDASTGTQTNGL) has biased composition (polar residues). Disordered regions lie at residues 1–33 (MNNP…KQPV), 68–97 (LNVQ…VQSA), 262–285 (VQTL…EPSD), and 357–385 (LSSD…RRKK). The span at 80 to 97 (DSQQSSQPSSQPPSVQSA) shows a compositional bias: low complexity. Polar residues predominate over residues 262–272 (VQTLPQSQSTP). A phosphothreonine mark is found at T271 and T277. Positions 281-355 (EEPSDLEELE…LLEKWLNDAE (75 aa)) constitute a POU-specific domain. Phosphoserine is present on S284. Residues 357 to 372 (LSSDSTASSPSALNSP) are compositionally biased toward low complexity. The segment at residues 382–441 (RRKKRTSIETNIRVALEKSFMENQKPTSEDITLIAEQLNMEKEVIRVWFCNRRQKEKRIN) is a DNA-binding region (homeobox). Phosphoserine occurs at positions 388 and 451. The segment covering 519 to 580 (TTTAGTTDST…TNTTQTTSTP (62 aa)) has biased composition (low complexity). The interval 519–589 (TTTAGTTDST…PLPSPLGASQ (71 aa)) is disordered.

Belongs to the POU transcription factor family. Class-2 subfamily. In terms of assembly, interacts with POU2AF1; the interaction increases POU2F1 transactivation activity. Interacts with NR3C1, AR, PGR and HCFC1. Post-translationally, phosphorylated by PRKDC. In terms of tissue distribution, ubiquitously expressed. However, isoforms 4 and 5 are only expressed in lymphocytes.

The protein localises to the nucleus. Transcription factor that binds to the octamer motif (5'-ATTTGCAT-3') and activates the promoters of the genes for some small nuclear RNAs (snRNA) and of genes such as those for histone H2B and immunoglobulins. Modulates transcription transactivation by NR3C1, AR and PGR. This chain is POU domain, class 2, transcription factor 1 (Pou2f1), found in Mus musculus (Mouse).